A 206-amino-acid polypeptide reads, in one-letter code: Pyridoxine/pyridoxamine 5'-phosphate oxidase (206 aa).

Residues 53-58 (RMVLLK), 68-69 (YT), Lys75, and Gln97 contribute to the FMN site. Substrate is bound at residue Lys58. Substrate contacts are provided by Tyr115, Arg119, and Ser123. Residues 132–133 (QS) and Trp177 contribute to the FMN site. 183-185 (RLH) contributes to the substrate binding site. Residue Arg187 coordinates FMN.

It belongs to the pyridoxamine 5'-phosphate oxidase family. Homodimer. The cofactor is FMN.

The enzyme catalyses pyridoxamine 5'-phosphate + O2 + H2O = pyridoxal 5'-phosphate + H2O2 + NH4(+). It catalyses the reaction pyridoxine 5'-phosphate + O2 = pyridoxal 5'-phosphate + H2O2. It functions in the pathway cofactor metabolism; pyridoxal 5'-phosphate salvage; pyridoxal 5'-phosphate from pyridoxamine 5'-phosphate: step 1/1. Its pathway is cofactor metabolism; pyridoxal 5'-phosphate salvage; pyridoxal 5'-phosphate from pyridoxine 5'-phosphate: step 1/1. In terms of biological role, catalyzes the oxidation of either pyridoxine 5'-phosphate (PNP) or pyridoxamine 5'-phosphate (PMP) into pyridoxal 5'-phosphate (PLP). The polypeptide is Pyridoxine/pyridoxamine 5'-phosphate oxidase (Rhizobium etli (strain ATCC 51251 / DSM 11541 / JCM 21823 / NBRC 15573 / CFN 42)).